The chain runs to 35 residues: Small toxic polypeptide LdrA (35 aa).

A helical membrane pass occupies residues 8–28 (MIFWHDLAAPILAGIITAAIV).

It belongs to the Ldr toxic peptide family.

It localises to the cell inner membrane. Toxic component of a type I toxin-antitoxin (TA) system. Inhibits ATP synthesis possibly due to its insertion in the cell inner membrane, ATP levels drop over 50% 2 minutes after induction. Overexpression is toxic leading to cell death, it inhibits cell growth within 30 minutes; C-terminally tagged versions of the protein are toxic while N-terminally tagged versions are not. This chain is Small toxic polypeptide LdrA (ldrA), found in Escherichia coli (strain K12).